The following is a 533-amino-acid chain: Decreased expression in renal and prostate cancer protein (533 aa).

A compositionally biased stretch (basic and acidic residues) spans 1–12; sequence MKEPRIFPRERP. Disordered regions lie at residues 1–31, 67–164, 177–259, and 299–350; these read MKEPRIFPRERPTPWTRAPLPPRGRLDGGPV, QNPS…PDPR, MRAG…RAGG, and ASGN…PNSA. Residue S160 is modified to Phosphoserine. Positions 299-309 are enriched in polar residues; it reads ASGNMGTNPPT. Asymmetric dimethylarginine is present on R368. R396 carries the omega-N-methylarginine modification. S432 carries the phosphoserine modification.

Belongs to the DERPC family.

The protein localises to the nucleus. Potential tumor suppressor. This Mus musculus (Mouse) protein is Decreased expression in renal and prostate cancer protein.